We begin with the raw amino-acid sequence, 238 residues long: NAD-dependent protein deacylase (238 aa).

Residues 1 to 237 form the Deacetylase sirtuin-type domain; that stretch reads MRGIMKVFVL…PAWVERLLAR (237 aa). 12-31 contacts NAD(+); it reads GAGVSAESGLGTFRDKDGVW. The substrate site is built by Y56 and R59. An NAD(+)-binding site is contributed by 94-97; it reads QNVD. H112 acts as the Proton acceptor in catalysis. Residues C120, C123, C139, and C142 each coordinate Zn(2+). NAD(+) is bound by residues 179 to 181, 205 to 207, and A223; these read GTS and NLE.

This sequence belongs to the sirtuin family. Class III subfamily. Zn(2+) is required as a cofactor.

It localises to the cytoplasm. The enzyme catalyses N(6)-acetyl-L-lysyl-[protein] + NAD(+) + H2O = 2''-O-acetyl-ADP-D-ribose + nicotinamide + L-lysyl-[protein]. It catalyses the reaction N(6)-succinyl-L-lysyl-[protein] + NAD(+) + H2O = 2''-O-succinyl-ADP-D-ribose + nicotinamide + L-lysyl-[protein]. Its function is as follows. NAD-dependent lysine deacetylase and desuccinylase that specifically removes acetyl and succinyl groups on target proteins. Modulates the activities of several proteins which are inactive in their acylated form. The chain is NAD-dependent protein deacylase from Caulobacter vibrioides (strain ATCC 19089 / CIP 103742 / CB 15) (Caulobacter crescentus).